The sequence spans 101 residues: MTTIADPRDILLAPVISEKSYGLIEEGTYTFLVHPDSNKTQIKIAVEKVFGVKVTSVNTANRQGKRKRTRFGYGKRKNTKRALVTISADSKPIEIFGGPVA.

This sequence belongs to the universal ribosomal protein uL23 family. Part of the 50S ribosomal subunit. Contacts protein L29, and trigger factor when it is bound to the ribosome.

Its function is as follows. One of the early assembly proteins it binds 23S rRNA. One of the proteins that surrounds the polypeptide exit tunnel on the outside of the ribosome. Forms the main docking site for trigger factor binding to the ribosome. The polypeptide is Large ribosomal subunit protein uL23 (Nocardia farcinica (strain IFM 10152)).